A 644-amino-acid chain; its full sequence is Kelch-like protein 34 (644 aa).

Residues 29 to 96 (CDVTLETEGS…IYTAWLSLSM (68 aa)) enclose the BTB domain. The 108-residue stretch at 131–238 (CCFAANVAAR…PADVLRRVYS (108 aa)) folds into the BACK domain. Positions 304-329 (AARGQVAAPEPEEEEEELEEEEEEEE) are disordered. Residues 313–329 (EPEEEEEELEEEEEEEE) are compositionally biased toward acidic residues. 6 Kelch repeats span residues 320–366 (ELEE…TAGN), 367–425 (FLFV…AVGE), 426–473 (RLLA…VGDR), 475–526 (VVYI…VLRG), 528–571 (VFAF…VVEE), and 573–623 (ALLL…VLQL).

In Homo sapiens (Human), this protein is Kelch-like protein 34 (KLHL34).